Consider the following 2006-residue polypeptide: Sodium channel protein type 2 subunit alpha (2006 aa).

The residue at position 4 (Ser4) is a Phosphoserine. The interval 28–61 (RIAEEKAKRPKQERKDEDDENGPKPNSDLEAGKS) is disordered. A Glycyl lysine isopeptide (Lys-Gly) (interchain with G-Cter in SUMO1) cross-link involves residue Lys38. The stretch at 111–456 (ILTPFNPIRK…QQMLEQLKKQ (346 aa)) is one I repeat. A helical transmembrane segment spans residues 130–148 (LFNVLIMCTILTNCVFMTM). The helical transmembrane segment at 156-176 (KNVEYTFTGIYTFESLIKILA) threads the bilayer. A helical membrane pass occupies residues 191–208 (WNWLDFTVITFAYVTEFV). A helical membrane pass occupies residues 215–231 (ALRTFRVLRALKTISVI). Residues 251–270 (VMILTVFCLSVFALIGLQLF) form a helical membrane-spanning segment. The cysteines at positions 278 and 338 are disulfide-linked. N-linked (GlcNAc...) asparagine glycans are attached at residues Asn285, Asn291, Asn297, Asn303, Asn308, and Asn340. An intramembrane region (pore-forming) is located at residues 370–394 (FSWAFLSLFRLMTQDFWENLYQLTL). Residues 402 to 422 (MIFFVLVIFLGSFYLINLILA) traverse the membrane as a helical segment. Phosphoserine occurs at positions 468, 471, 484, 526, 528, 531, 553, 554, 558, 573, 576, 589, 610, 623, 687, 688, and 722. A disordered region spans residues 494-529 (SSKSEKELKNRRKKKKQKEQAGEEEKEDAVRKSASE). Residues 511 to 529 (KEQAGEEEKEDAVRKSASE) show a composition bias toward basic and acidic residues. The segment at 589 to 635 (SENDFADDEHSTFEDNDSRRDSLFVPHRHGERRPSNVSQASRASRGI) is disordered. Positions 596–610 (DEHSTFEDNDSRRDS) are enriched in basic and acidic residues. An II repeat occupies 742–1014 (CCKPWLKVKH…QIAVGRMQKG (273 aa)). Residues 761–779 (FVDLAITICIVLNTLFMAM) form a helical membrane-spanning segment. A helical membrane pass occupies residues 791–810 (VLSVGNLVFTGIFTAEMFLK). The chain crosses the membrane as a helical span at residues 825 to 844 (NIFDGFIVSLSLMELGLANV). The chain crosses the membrane as a helical span at residues 847 to 864 (LSVLRSFRLLRVFKLAKS). A helical transmembrane segment spans residues 881-899 (ALGNLTLVLAIIVFIFAVV). The cysteines at positions 913 and 919 are disulfide-linked. Residues 918-919 (DC) are binds SCN2B. An intramembrane region (pore-forming) is located at residues 929 to 949 (FFHSFLIVFRVLCGEWIETMW). Cys951 and Cys960 are disulfide-bonded. A helical transmembrane segment spans residues 963–983 (VFMMVMVIGNLVVLNLFLALL). A disordered region spans residues 1121 to 1167 (EEFSSESDMEESKEKLNATSSSEGSTVDIGAPAEGEQPEAEPEESLE). The segment covering 1156 to 1167 (EQPEAEPEESLE) has biased composition (acidic residues). The III repeat unit spans residues 1191–1505 (KGKLWWNLRK…KKYYNAMKKL (315 aa)). Residues 1211 to 1228 (FETFIVFMILLSSGALAF) traverse the membrane as a helical segment. Residues 1242-1260 (MLEYADKVFTYIFILEMLL) form a helical membrane-spanning segment. Residues 1275–1293 (WCWLDFLIVDVSLVSLTAN) traverse the membrane as a helical segment. Residues 1302–1320 (AIKSLRTLRALRPLRALSR) traverse the membrane as a helical segment. Residues 1338–1357 (IMNVLLVCLIFWLIFSIMGV) traverse the membrane as a helical segment. An intrachain disulfide couples Cys1367 to Cys1387. Positions 1410 to 1431 (GLGYLSLLQVATFKGWMDIMYA) form an intramembrane region, pore-forming. Residues 1449 to 1470 (YMYLYFVIFIIFGSFFTLNLFI) traverse the membrane as a helical segment. Position 1507 is a phosphoserine (Ser1507). One copy of the IV repeat lies at 1514–1812 (IPRPANKFQG…WEKFDPDATQ (299 aa)). A helical transmembrane segment spans residues 1534–1551 (FDISIMILICLNMVTMMV). A helical membrane pass occupies residues 1563-1581 (ILYWINLVFIVLFTGECVL). The helical transmembrane segment at 1594 to 1611 (GWNIFDFVVVILSIVGMF) threads the bilayer. A helical membrane pass occupies residues 1625–1641 (LFRVIRLARIGRILRLI). A helical transmembrane segment spans residues 1661–1678 (LFNIGLLLFLVMFIYAIF). The segment at residues 1701–1723 (FGNSMICLFQITTSAGWDGLLAP) is an intramembrane region (pore-forming). Cys1732 and Cys1747 form a disulfide bridge. A helical transmembrane segment spans residues 1754–1776 (IFFFVSYIIISFLVVVNMYIAVI). The IQ domain maps to 1906–1935 (EEVSAIVIQRAYRRYLLKQKVKKVSSIYKK). Position 1931 is a phosphoserine (Ser1931). Residues 1934–1965 (KKDKGKEDEGTPIKEDIITDKLNENSTPEKTD) show a composition bias toward basic and acidic residues. Positions 1934 to 2006 (KKDKGKEDEG…KGKDIRESKK (73 aa)) are disordered. Thr1944, Thr1964, and Thr1967 each carry phosphothreonine. Ser1972 is subject to Phosphoserine. The segment covering 1980-2006 (TKPEKEKFEKDKSEKEDKGKDIRESKK) has biased composition (basic and acidic residues).

This sequence belongs to the sodium channel (TC 1.A.1.10) family. Nav1.2/SCN2A subfamily. Heterooligomer of a large alpha subunit and a smaller beta subunit. Heterooligomer with SCN2B or SCN4B; disulfide-linked. Interacts with NEDD4L. Interacts with CALM. Interacts with TMEM233. Post-translationally, sumoylated at Lys-38. Sumoylation is induced by hypoxia, increases voltage-gated sodium current and mediates the early response to acute hypoxia in neurons. Sumoylated SCN2A is located at the cell membrane. In terms of tissue distribution, expressed in brain (at protein level). Detected in hippocampus, cortex and brain stem.

The protein resides in the cell membrane. It carries out the reaction Na(+)(in) = Na(+)(out). Mediates the voltage-dependent sodium ion permeability of excitable membranes. Assuming opened or closed conformations in response to the voltage difference across the membrane, the protein forms a sodium-selective channel through which Na(+) ions may pass in accordance with their electrochemical gradient. Implicated in the regulation of hippocampal replay occurring within sharp wave ripples (SPW-R) important for memory. This Mus musculus (Mouse) protein is Sodium channel protein type 2 subunit alpha.